We begin with the raw amino-acid sequence, 312 residues long: tRNA pseudouridine synthase B (312 aa).

Catalysis depends on Asp-46, which acts as the Nucleophile. Substrate contacts are provided by Tyr-74, Tyr-177, and Leu-198.

The protein belongs to the pseudouridine synthase TruB family. Type 1 subfamily.

It carries out the reaction uridine(55) in tRNA = pseudouridine(55) in tRNA. In terms of biological role, responsible for synthesis of pseudouridine from uracil-55 in the psi GC loop of transfer RNAs. The chain is tRNA pseudouridine synthase B from Buchnera aphidicola subsp. Acyrthosiphon pisum (strain APS) (Acyrthosiphon pisum symbiotic bacterium).